A 491-amino-acid chain; its full sequence is Arginine decarboxylase (491 aa).

Lys227 is modified (N6-(pyridoxal phosphate)lysine).

This sequence belongs to the Orn/Lys/Arg decarboxylase class-I family. It depends on pyridoxal 5'-phosphate as a cofactor.

The protein resides in the cytoplasm. The enzyme catalyses L-arginine + H(+) = agmatine + CO2. The protein operates within amine and polyamine biosynthesis; agmatine biosynthesis; agmatine from L-arginine: step 1/1. Functionally, catalyzes the formation of agmatine from arginine. This is Arginine decarboxylase (speA) from Halalkalibacterium halodurans (strain ATCC BAA-125 / DSM 18197 / FERM 7344 / JCM 9153 / C-125) (Bacillus halodurans).